Reading from the N-terminus, the 784-residue chain is Probable phosphoketolase (784 aa).

This sequence belongs to the XFP family. It depends on thiamine diphosphate as a cofactor.

This is Probable phosphoketolase from Rhodopseudomonas palustris (strain HaA2).